The primary structure comprises 162 residues: Probable chemoreceptor glutamine deamidase CheD (162 aa).

Belongs to the CheD family.

The enzyme catalyses L-glutaminyl-[protein] + H2O = L-glutamyl-[protein] + NH4(+). Its function is as follows. Probably deamidates glutamine residues to glutamate on methyl-accepting chemotaxis receptors (MCPs), playing an important role in chemotaxis. The polypeptide is Probable chemoreceptor glutamine deamidase CheD (Clostridium botulinum (strain Eklund 17B / Type B)).